A 279-amino-acid chain; its full sequence is Tryptophan 2,3-dioxygenase (279 aa).

Substrate contacts are provided by residues 48–52, Tyr110, and Arg114; that span reads FIVIH. His237 contacts heme. Thr251 is a substrate binding site.

This sequence belongs to the tryptophan 2,3-dioxygenase family. As to quaternary structure, homotetramer. Requires heme as cofactor.

It carries out the reaction L-tryptophan + O2 = N-formyl-L-kynurenine. The protein operates within amino-acid degradation; L-tryptophan degradation via kynurenine pathway; L-kynurenine from L-tryptophan: step 1/2. Heme-dependent dioxygenase that catalyzes the oxidative cleavage of the L-tryptophan (L-Trp) pyrrole ring and converts L-tryptophan to N-formyl-L-kynurenine. Catalyzes the oxidative cleavage of the indole moiety. This Bacillus anthracis protein is Tryptophan 2,3-dioxygenase.